A 471-amino-acid chain; its full sequence is 3-isopropylmalate dehydratase large subunit (471 aa).

Residues cysteine 347, cysteine 407, and cysteine 410 each coordinate [4Fe-4S] cluster.

The protein belongs to the aconitase/IPM isomerase family. LeuC type 1 subfamily. Heterodimer of LeuC and LeuD. [4Fe-4S] cluster serves as cofactor.

It carries out the reaction (2R,3S)-3-isopropylmalate = (2S)-2-isopropylmalate. The protein operates within amino-acid biosynthesis; L-leucine biosynthesis; L-leucine from 3-methyl-2-oxobutanoate: step 2/4. Its function is as follows. Catalyzes the isomerization between 2-isopropylmalate and 3-isopropylmalate, via the formation of 2-isopropylmaleate. This is 3-isopropylmalate dehydratase large subunit from Prochlorococcus marinus (strain MIT 9211).